Reading from the N-terminus, the 338-residue chain is Glyceraldehyde-3-phosphate dehydrogenase (338 aa).

NAD(+) is bound by residues 12 to 13 (RI), Asp-34, and Arg-80. Residues 151–153 (SCT), Thr-182, 211–212 (TG), and Arg-234 each bind D-glyceraldehyde 3-phosphate. The Nucleophile role is filled by Cys-152. Asn-316 is an NAD(+) binding site.

The protein belongs to the glyceraldehyde-3-phosphate dehydrogenase family. As to quaternary structure, homotetramer.

It is found in the cytoplasm. It catalyses the reaction D-glyceraldehyde 3-phosphate + phosphate + NAD(+) = (2R)-3-phospho-glyceroyl phosphate + NADH + H(+). It participates in carbohydrate degradation; glycolysis; pyruvate from D-glyceraldehyde 3-phosphate: step 1/5. The protein is Glyceraldehyde-3-phosphate dehydrogenase (GPD) of Paracoccidioides lutzii (strain ATCC MYA-826 / Pb01) (Paracoccidioides brasiliensis).